A 150-amino-acid polypeptide reads, in one-letter code: SsrA-binding protein (150 aa).

Belongs to the SmpB family.

Its subcellular location is the cytoplasm. Its function is as follows. Required for rescue of stalled ribosomes mediated by trans-translation. Binds to transfer-messenger RNA (tmRNA), required for stable association of tmRNA with ribosomes. tmRNA and SmpB together mimic tRNA shape, replacing the anticodon stem-loop with SmpB. tmRNA is encoded by the ssrA gene; the 2 termini fold to resemble tRNA(Ala) and it encodes a 'tag peptide', a short internal open reading frame. During trans-translation Ala-aminoacylated tmRNA acts like a tRNA, entering the A-site of stalled ribosomes, displacing the stalled mRNA. The ribosome then switches to translate the ORF on the tmRNA; the nascent peptide is terminated with the 'tag peptide' encoded by the tmRNA and targeted for degradation. The ribosome is freed to recommence translation, which seems to be the essential function of trans-translation. This is SsrA-binding protein from Campylobacter jejuni (strain RM1221).